The primary structure comprises 222 residues: Glutathione-specific gamma-glutamylcyclotransferase 1 (222 aa).

The segment covering M1–Q22 has biased composition (low complexity). The segment at M1–P24 is disordered. I35–S40 lines the substrate pocket. E115 acts as the Proton acceptor in catalysis.

It belongs to the gamma-glutamylcyclotransferase family. ChaC subfamily. In terms of assembly, interacts with NOTCH1 (via extracellular region).

The protein localises to the cytoplasm. Its subcellular location is the cytosol. It localises to the golgi apparatus. The protein resides in the trans-Golgi network. The enzyme catalyses glutathione = L-cysteinylglycine + 5-oxo-L-proline. Its function is as follows. Catalyzes the cleavage of glutathione into 5-oxo-L-proline and a Cys-Gly dipeptide. Acts specifically on glutathione, but not on other gamma-glutamyl peptides. Glutathione depletion is an important factor for apoptosis initiation and execution. Acts as a pro-apoptotic component of the unfolded protein response pathway by mediating the pro-apoptotic effects of the ATF4-ATF3-DDIT3/CHOP cascade. Negative regulator of Notch signaling pathway involved in embryonic neurogenesis: acts by inhibiting Notch cleavage by furin, maintaining Notch in an immature inactive form, thereby promoting neurogenesis in embryos. In Homo sapiens (Human), this protein is Glutathione-specific gamma-glutamylcyclotransferase 1.